Consider the following 423-residue polypeptide: Histidine--tRNA ligase (423 aa).

Belongs to the class-II aminoacyl-tRNA synthetase family. As to quaternary structure, homodimer.

It is found in the cytoplasm. It catalyses the reaction tRNA(His) + L-histidine + ATP = L-histidyl-tRNA(His) + AMP + diphosphate + H(+). The sequence is that of Histidine--tRNA ligase from Orientia tsutsugamushi (strain Ikeda) (Rickettsia tsutsugamushi).